A 323-amino-acid polypeptide reads, in one-letter code: Movement protein (323 aa).

The stretch at 292–322 (SLLENKDENLLRSMSTKIDTLGKKLSLIYDN) forms a coiled coil.

Belongs to the caulimoviridae movement protein family. In terms of assembly, homotrimer, through the coiled-coil domain. Interacts with VAP.

The protein resides in the host cell junction. It is found in the host plasmodesma. Its function is as follows. Transports viral genome to neighboring plant cells directly through plasmosdesmata, without any budding. The movement protein allows efficient cell to cell propagation, by bypassing the host cell wall barrier. Acts by forming tubules structures that increase the size exclusion limit (SEL) of plasmodesmata, thereby allowing viral ribonucleocapsids to spread directly to neighboring cells. This is Movement protein from Figwort mosaic virus (strain DxS) (FMV).